Consider the following 393-residue polypeptide: NAD(P)H-quinone oxidoreductase subunit H, chloroplastic (393 aa).

This sequence belongs to the complex I 49 kDa subunit family. In terms of assembly, NDH is composed of at least 16 different subunits, 5 of which are encoded in the nucleus.

It is found in the plastid. It localises to the chloroplast thylakoid membrane. It catalyses the reaction a plastoquinone + NADH + (n+1) H(+)(in) = a plastoquinol + NAD(+) + n H(+)(out). It carries out the reaction a plastoquinone + NADPH + (n+1) H(+)(in) = a plastoquinol + NADP(+) + n H(+)(out). Its function is as follows. NDH shuttles electrons from NAD(P)H:plastoquinone, via FMN and iron-sulfur (Fe-S) centers, to quinones in the photosynthetic chain and possibly in a chloroplast respiratory chain. The immediate electron acceptor for the enzyme in this species is believed to be plastoquinone. Couples the redox reaction to proton translocation, and thus conserves the redox energy in a proton gradient. This Morus indica (Mulberry) protein is NAD(P)H-quinone oxidoreductase subunit H, chloroplastic.